The following is a 473-amino-acid chain: MKTLYSLRRFYPVETLFNGTLALAGRDQETTGFAWWAGNARLINLSGKLLGAHVAHAGLIVFWAGAMNLFEVAHFVPEKPMYEQGLILLPHLATLGWGVGPGGEVIDTFPYFVSGVLHLISSAVLGFGGIYHALLGPETLEESFPFFGYVWKDRNKMTTILGIHLILLGIGAFLLVLKALYFGGVYDTWAPGGGDVRKITNLTLSPSVIFGYLLKSPFGGEGWIVSVDDLEDIIGGHIWLGSICILGGIWHILTKPFAWARRAFVWSGEAYLSYSLAALSVFGFIACCFVWFNNTAYPSEFYGPTGPEASQAQAFTFLVRDQRLGANVGSAQGPTGLGKYLMRSPTGEVIFGGETMRFWDLRAPWLEPLRGPNGLDLSRLKKDIQPWQERRSAEYMTHAPLGSLNSVGGVATEINAVNYVSPRSWLATSHFVLGFFLFVGHLWHAGRARAAAAGFEKGIDRDFEPVLSMTPLN.

The propeptide occupies 1–14 (MKTLYSLRRFYPVE). Thr15 carries the N-acetylthreonine modification. Thr15 carries the phosphothreonine modification. 5 consecutive transmembrane segments (helical) span residues 69 to 93 (LFEVAHFVPEKPMYEQGLILLPHLA), 134 to 155 (LLGPETLEESFPFFGYVWKDRN), 178 to 200 (KALYFGGVYDTWAPGGGDVRKIT), 255 to 275 (KPFAWARRAFVWSGEAYLSYS), and 291 to 312 (WFNNTAYPSEFYGPTGPEASQA). Glu367 contributes to the [CaMn4O5] cluster binding site. A helical membrane pass occupies residues 447–471 (RARAAAAGFEKGIDRDFEPVLSMTP).

This sequence belongs to the PsbB/PsbC family. PsbC subfamily. In terms of assembly, PSII is composed of 1 copy each of membrane proteins PsbA, PsbB, PsbC, PsbD, PsbE, PsbF, PsbH, PsbI, PsbJ, PsbK, PsbL, PsbM, PsbT, PsbX, PsbY, PsbZ, Psb30/Ycf12, at least 3 peripheral proteins of the oxygen-evolving complex and a large number of cofactors. It forms dimeric complexes. Binds multiple chlorophylls and provides some of the ligands for the Ca-4Mn-5O cluster of the oxygen-evolving complex. It may also provide a ligand for a Cl- that is required for oxygen evolution. PSII binds additional chlorophylls, carotenoids and specific lipids. is required as a cofactor.

The protein localises to the plastid. Its subcellular location is the chloroplast thylakoid membrane. Functionally, one of the components of the core complex of photosystem II (PSII). It binds chlorophyll and helps catalyze the primary light-induced photochemical processes of PSII. PSII is a light-driven water:plastoquinone oxidoreductase, using light energy to abstract electrons from H(2)O, generating O(2) and a proton gradient subsequently used for ATP formation. This Drimys granadensis protein is Photosystem II CP43 reaction center protein.